The primary structure comprises 94 residues: Acylphosphatase (94 aa).

In terms of domain architecture, Acylphosphatase-like spans Ala7–Gly94. Residues Arg22 and Asn40 contribute to the active site.

This sequence belongs to the acylphosphatase family.

It catalyses the reaction an acyl phosphate + H2O = a carboxylate + phosphate + H(+). In Rhizobium etli (strain ATCC 51251 / DSM 11541 / JCM 21823 / NBRC 15573 / CFN 42), this protein is Acylphosphatase (acyP).